Consider the following 148-residue polypeptide: Coactosin (148 aa).

Positions 1-134 (MSGFDLSEVA…VEDEIAAKIK (134 aa)) constitute an ADF-H domain. The short motif at 71–76 (DEESKR) is the F-loop; important for stable binding to G-actin and F-actin element. Ser-147 is modified (phosphoserine).

Belongs to the actin-binding proteins ADF family. Coactosin subfamily. Interacts with 14-3-3 protein 3. Post-translationally, phosphorylation at Ser-147 appears not to affect its binding to actin; however, it may regulate phagocytosis and motility.

Its subcellular location is the cytoplasm. It is found in the cell projection. The protein localises to the phagocytic cup. It localises to the pseudopodium. The protein resides in the cell membrane. Its subcellular location is the cytoskeleton. Functionally, actin-binding protein which is involved in F-actin stabilization. May play a role during phagocytosis and pseudopod formation by contributing to the maintenance of F-actin. This Entamoeba histolytica (strain ATCC 30459 / HM-1:IMSS / ABRM) protein is Coactosin.